Here is a 209-residue protein sequence, read N- to C-terminus: Ribosomal RNA large subunit methyltransferase E (209 aa).

5 residues coordinate S-adenosyl-L-methionine: glycine 63, tryptophan 65, aspartate 83, aspartate 99, and aspartate 124. Residue lysine 164 is the Proton acceptor of the active site.

It belongs to the class I-like SAM-binding methyltransferase superfamily. RNA methyltransferase RlmE family.

It localises to the cytoplasm. It carries out the reaction uridine(2552) in 23S rRNA + S-adenosyl-L-methionine = 2'-O-methyluridine(2552) in 23S rRNA + S-adenosyl-L-homocysteine + H(+). Its function is as follows. Specifically methylates the uridine in position 2552 of 23S rRNA at the 2'-O position of the ribose in the fully assembled 50S ribosomal subunit. The polypeptide is Ribosomal RNA large subunit methyltransferase E (Escherichia coli O81 (strain ED1a)).